The sequence spans 892 residues: Translation initiation factor IF-2 (892 aa).

Positions 88–306 are disordered; the sequence is KKRTFVKRDP…LQQGFQKPAQ (219 aa). Basic and acidic residues-rich tracts occupy residues 93–159 and 166–216; these read VKRD…KDKV and DMIK…EENK. Residues 254 to 269 are compositionally biased toward basic residues; it reads GRGRNAKAARPAKKGK. Residues 270 to 282 show a composition bias toward basic and acidic residues; the sequence is HAESKADREEARA. Residues 391–560 form the tr-type G domain; sequence PRAPVVTIMG…LLQAEVLELK (170 aa). A G1 region spans residues 400 to 407; that stretch reads GHVDHGKT. Residue 400–407 coordinates GTP; sequence GHVDHGKT. Residues 425-429 are G2; that stretch reads GITQH. The G3 stretch occupies residues 446 to 449; the sequence is DTPG. Residues 446-450 and 500-503 contribute to the GTP site; these read DTPGH and NKID. The interval 500 to 503 is G4; it reads NKID. The tract at residues 536-538 is G5; sequence SAK.

This sequence belongs to the TRAFAC class translation factor GTPase superfamily. Classic translation factor GTPase family. IF-2 subfamily.

It localises to the cytoplasm. In terms of biological role, one of the essential components for the initiation of protein synthesis. Protects formylmethionyl-tRNA from spontaneous hydrolysis and promotes its binding to the 30S ribosomal subunits. Also involved in the hydrolysis of GTP during the formation of the 70S ribosomal complex. This chain is Translation initiation factor IF-2, found in Salmonella schwarzengrund (strain CVM19633).